The primary structure comprises 308 residues: Pantothenate synthetase (308 aa).

Position 39–46 (39–46) interacts with ATP; that stretch reads MGALHDGH. Residue His46 is the Proton donor of the active site. (R)-pantoate is bound at residue Gln71. A beta-alanine-binding site is contributed by Gln71. An ATP-binding site is contributed by 157–160; the sequence is GEKD. Gln163 is a (R)-pantoate binding site. Residues Val186 and 194-197 each bind ATP; that span reads MSSR. Residues 286-308 are disordered; the sequence is IETPAGTAGPDGDRQYAQSPWRN.

It belongs to the pantothenate synthetase family. In terms of assembly, homodimer.

The protein localises to the cytoplasm. The enzyme catalyses (R)-pantoate + beta-alanine + ATP = (R)-pantothenate + AMP + diphosphate + H(+). Its pathway is cofactor biosynthesis; (R)-pantothenate biosynthesis; (R)-pantothenate from (R)-pantoate and beta-alanine: step 1/1. Catalyzes the condensation of pantoate with beta-alanine in an ATP-dependent reaction via a pantoyl-adenylate intermediate. This Mycobacterium avium (strain 104) protein is Pantothenate synthetase.